We begin with the raw amino-acid sequence, 295 residues long: Probable ketoamine kinase slr1563 (295 aa).

99–101 (EWL) is an ATP binding site. The Proton acceptor role is filled by aspartate 201.

It belongs to the fructosamine kinase family.

Its function is as follows. Ketoamine kinase that phosphorylates ketoamines on the third carbon of the sugar moiety to generate ketoamine 3-phosphate. The chain is Probable ketoamine kinase slr1563 from Synechocystis sp. (strain ATCC 27184 / PCC 6803 / Kazusa).